The primary structure comprises 71 residues: UPF0346 protein Bcer98_1690 (71 aa).

Belongs to the UPF0346 family.

This is UPF0346 protein Bcer98_1690 from Bacillus cytotoxicus (strain DSM 22905 / CIP 110041 / 391-98 / NVH 391-98).